Here is a 319-residue protein sequence, read N- to C-terminus: Aspartate carbamoyltransferase catalytic subunit (319 aa).

Carbamoyl phosphate contacts are provided by arginine 59 and threonine 60. Lysine 87 serves as a coordination point for L-aspartate. Carbamoyl phosphate contacts are provided by arginine 109, histidine 137, and glutamine 140. Residues arginine 170 and arginine 224 each coordinate L-aspartate. The carbamoyl phosphate site is built by glycine 265 and proline 266.

Belongs to the aspartate/ornithine carbamoyltransferase superfamily. ATCase family. Heterododecamer (2C3:3R2) of six catalytic PyrB chains organized as two trimers (C3), and six regulatory PyrI chains organized as three dimers (R2).

It catalyses the reaction carbamoyl phosphate + L-aspartate = N-carbamoyl-L-aspartate + phosphate + H(+). It functions in the pathway pyrimidine metabolism; UMP biosynthesis via de novo pathway; (S)-dihydroorotate from bicarbonate: step 2/3. In terms of biological role, catalyzes the condensation of carbamoyl phosphate and aspartate to form carbamoyl aspartate and inorganic phosphate, the committed step in the de novo pyrimidine nucleotide biosynthesis pathway. This chain is Aspartate carbamoyltransferase catalytic subunit, found in Gemmatimonas aurantiaca (strain DSM 14586 / JCM 11422 / NBRC 100505 / T-27).